Reading from the N-terminus, the 325-residue chain is Glutarate 2-hydroxylase (325 aa).

Positions 160, 162, and 292 each coordinate Fe cation.

Belongs to the glutarate hydroxylase family. In terms of assembly, homotetramer. Fe(2+) serves as cofactor.

It catalyses the reaction glutarate + 2-oxoglutarate + O2 = (S)-2-hydroxyglutarate + succinate + CO2. It participates in amino-acid degradation. Its function is as follows. Acts as an alpha-ketoglutarate-dependent dioxygenase catalyzing hydroxylation of glutarate (GA) to L-2-hydroxyglutarate (L2HG). Functions in a L-lysine degradation pathway that proceeds via cadaverine, glutarate and L-2-hydroxyglutarate. The sequence is that of Glutarate 2-hydroxylase from Pseudomonas putida (strain GB-1).